Here is a 156-residue protein sequence, read N- to C-terminus: SsrA-binding protein (156 aa).

Belongs to the SmpB family.

It is found in the cytoplasm. Required for rescue of stalled ribosomes mediated by trans-translation. Binds to transfer-messenger RNA (tmRNA), required for stable association of tmRNA with ribosomes. tmRNA and SmpB together mimic tRNA shape, replacing the anticodon stem-loop with SmpB. tmRNA is encoded by the ssrA gene; the 2 termini fold to resemble tRNA(Ala) and it encodes a 'tag peptide', a short internal open reading frame. During trans-translation Ala-aminoacylated tmRNA acts like a tRNA, entering the A-site of stalled ribosomes, displacing the stalled mRNA. The ribosome then switches to translate the ORF on the tmRNA; the nascent peptide is terminated with the 'tag peptide' encoded by the tmRNA and targeted for degradation. The ribosome is freed to recommence translation, which seems to be the essential function of trans-translation. The protein is SsrA-binding protein of Shouchella clausii (strain KSM-K16) (Alkalihalobacillus clausii).